The chain runs to 704 residues: Tryptophan synthase (704 aa).

Residues 1–292 (MEAIKKVFEQ…QLTPNAETAK (292 aa)) form a tryptophan synthase alpha chain region. Active-site proton acceptor residues include glutamate 49 and aspartate 60. The tract at residues 293–704 (GVENILPARF…HVSSNAIPSK (412 aa)) is tryptophan synthase beta chain. Lysine 380 bears the N6-(pyridoxal phosphate)lysine mark.

The protein in the N-terminal section; belongs to the TrpA family. This sequence in the C-terminal section; belongs to the TrpB family. Pyridoxal 5'-phosphate is required as a cofactor.

The enzyme catalyses (1S,2R)-1-C-(indol-3-yl)glycerol 3-phosphate + L-serine = D-glyceraldehyde 3-phosphate + L-tryptophan + H2O. It functions in the pathway amino-acid biosynthesis; L-tryptophan biosynthesis; L-tryptophan from chorismate: step 5/5. The polypeptide is Tryptophan synthase (TRP-1) (Coprinopsis cinerea (strain Okayama-7 / 130 / ATCC MYA-4618 / FGSC 9003) (Inky cap fungus)).